The following is a 348-amino-acid chain: Flap endonuclease 1 (348 aa).

Positions 1 to 98 (MGLAELRELI…ETLERRRERK (98 aa)) are N-domain. Residues D28, D80, E149, E151, D170, D172, and D234 each contribute to the Mg(2+) site. An I-domain region spans residues 113 to 256 (EREKYARQVA…RALQLIRKYG (144 aa)). The interval 340 to 348 (RQETLDAFF) is interaction with PCNA.

Belongs to the XPG/RAD2 endonuclease family. FEN1 subfamily. Interacts with PCNA. PCNA stimulates the nuclease activity without altering cleavage specificity. The cofactor is Mg(2+).

Structure-specific nuclease with 5'-flap endonuclease and 5'-3' exonuclease activities involved in DNA replication and repair. During DNA replication, cleaves the 5'-overhanging flap structure that is generated by displacement synthesis when DNA polymerase encounters the 5'-end of a downstream Okazaki fragment. Binds the unpaired 3'-DNA end and kinks the DNA to facilitate 5' cleavage specificity. Cleaves one nucleotide into the double-stranded DNA from the junction in flap DNA, leaving a nick for ligation. Also involved in the base excision repair (BER) pathway. Acts as a genome stabilization factor that prevents flaps from equilibrating into structures that lead to duplications and deletions. Also possesses 5'-3' exonuclease activity on nicked or gapped double-stranded DNA. In Methanopyrus kandleri (strain AV19 / DSM 6324 / JCM 9639 / NBRC 100938), this protein is Flap endonuclease 1.